Reading from the N-terminus, the 128-residue chain is Lymphocyte antigen 6D (128 aa).

Residues 1–20 (MRTALLLLAALAVATGPALT) form the signal peptide. The UPAR/Ly6 domain maps to 21 to 108 (LRCHVCTSSS…AAPTRTALAH (88 aa)). Cystine bridges form between Cys23–Cys45, Cys26–Cys32, Cys38–Cys63, Cys67–Cys86, and Cys87–Cys92. A lipid anchor (GPI-anchor amidated asparagine) is attached at Asn98. The propeptide at 99–128 (AAPTRTALAHSALSLGLALSLLAVILAPSL) is removed in mature form.

As to expression, expressed exclusively at the outer cell surface of transitional epithelia and the keratinocyte of stratified squamous epithelia.

Its subcellular location is the cell membrane. Functionally, may act as a specification marker at earliest stage specification of lymphocytes between B- and T-cell development. Marks the earliest stage of B-cell specification. The polypeptide is Lymphocyte antigen 6D (LY6D) (Homo sapiens (Human)).